The sequence spans 67 residues: Sperm protamine P1 (67 aa).

The tract at residues 1-67 (MASYRNSRSR…RRRKRNNENK (67 aa)) is disordered. 2 stretches are compositionally biased toward basic residues: residues 7–25 (SRSR…RSRV) and 34–67 (RSSR…NENK).

This sequence belongs to the protamine P1 family. As to expression, testis.

Its subcellular location is the nucleus. It is found in the chromosome. In terms of biological role, protamines substitute for histones in the chromatin of sperm during the haploid phase of spermatogenesis. They compact sperm DNA into a highly condensed, stable and inactive complex. The protein is Sperm protamine P1 (PRM1) of Isoodon macrourus (Short-nosed bandicoot).